The sequence spans 191 residues: Holliday junction branch migration complex subunit RuvA (191 aa).

The interval M1–G64 is domain I. The tract at residues S65–L138 is domain II. The tract at residues L138–V141 is flexible linker. The domain III stretch occupies residues P142–A191.

This sequence belongs to the RuvA family. As to quaternary structure, homotetramer. Forms an RuvA(8)-RuvB(12)-Holliday junction (HJ) complex. HJ DNA is sandwiched between 2 RuvA tetramers; dsDNA enters through RuvA and exits via RuvB. An RuvB hexamer assembles on each DNA strand where it exits the tetramer. Each RuvB hexamer is contacted by two RuvA subunits (via domain III) on 2 adjacent RuvB subunits; this complex drives branch migration. In the full resolvosome a probable DNA-RuvA(4)-RuvB(12)-RuvC(2) complex forms which resolves the HJ.

It is found in the cytoplasm. The RuvA-RuvB-RuvC complex processes Holliday junction (HJ) DNA during genetic recombination and DNA repair, while the RuvA-RuvB complex plays an important role in the rescue of blocked DNA replication forks via replication fork reversal (RFR). RuvA specifically binds to HJ cruciform DNA, conferring on it an open structure. The RuvB hexamer acts as an ATP-dependent pump, pulling dsDNA into and through the RuvAB complex. HJ branch migration allows RuvC to scan DNA until it finds its consensus sequence, where it cleaves and resolves the cruciform DNA. The chain is Holliday junction branch migration complex subunit RuvA from Thiobacillus denitrificans (strain ATCC 25259 / T1).